The chain runs to 937 residues: Protocadherin alpha-7 (937 aa).

The signal sequence occupies residues 1–29 (MVCPNGYDPGGRHLLLFIIILAAWEAGRG). Cadherin domains are found at residues 30–133 (QLHY…PPVF), 134–242 (PATQ…APVF), 243–350 (DRTL…APQL), 351–455 (TLTS…APAF), 456–565 (AQPE…APAL), and 581–678 (VPRS…APKA). Over 30 to 697 (QLHYSVPEEA…GPETELVDVN (668 aa)) the chain is Extracellular. C96 and C102 are oxidised to a cystine. N-linked (GlcNAc...) asparagine glycosylation is found at N254 and N265. N548 is a glycosylation site (N-linked (GlcNAc...) asparagine). The helical transmembrane segment at 698–718 (VYLIIAICAVSSLLVLTLLLY) threads the bilayer. Topologically, residues 719-937 (TALRCSAPSS…GNSTTDNSDQ (219 aa)) are cytoplasmic. 2 disordered regions span residues 755–795 (RQRV…DWRY) and 814–937 (ILRA…NSDQ). PXXP repeat units lie at residues 774–777 (PSLP), 786–789 (PRQP), 819–822 (PGGP), 860–863 (PGNP), and 878–881 (PGSP). Positions 774 to 881 (PSLPQGPSST…PDKFIIPGSP (108 aa)) are 5 X 4 AA repeats of P-X-X-P. Over residues 775-787 (SLPQGPSSTDNPR) the composition is skewed to polar residues. Residues 896 to 910 (DKSDFITFGKKEETK) are compositionally biased toward basic and acidic residues.

In terms of assembly, forms homodimers in trans (molecules expressed by two different cells). Forms promiscuous heterodimers in cis (at the plasma membrane of the same cell) with other protocadherins.

It is found in the cell membrane. In terms of biological role, calcium-dependent cell-adhesion protein involved in cells self-recognition and non-self discrimination. Thereby, it is involved in the establishment and maintenance of specific neuronal connections in the brain. The chain is Protocadherin alpha-7 from Homo sapiens (Human).